Consider the following 498-residue polypeptide: Zinc finger protein 395 (498 aa).

The segment at 129-165 is disordered; the sequence is QKPLSSPIEQSLPTSPGATSTSAQRSVSRSIDVPKRR. Positions 130–157 are enriched in polar residues; the sequence is KPLSSPIEQSLPTSPGATSTSAQRSVSR. Positions 171–180 match the Nuclear export signal motif; sequence MDEMMAAMVL. The interval 209 to 245 is disordered; that stretch reads KEGGDVSDSGSSTTSGHWSASSGVSTPSPPHTDASPK. Residues 214–231 are compositionally biased toward low complexity; it reads VSDSGSSTTSGHWSASSG. Residues 285–310 form a C2H2-type zinc finger; that stretch reads YKCLWPNCGKLLRSIVGIKRHVKTQH.

Its subcellular location is the cytoplasm. It localises to the nucleus. This chain is Zinc finger protein 395 (znf395), found in Xenopus laevis (African clawed frog).